Reading from the N-terminus, the 207-residue chain is Glycerol-3-phosphate acyltransferase (207 aa).

5 helical membrane passes run 4-24 (VVAT…SFAV), 58-78 (ILTL…AQLL), 86-106 (DMGI…PVFH), 120-140 (ILLA…LIIA), and 162-182 (VLLF…VLLI).

The protein belongs to the PlsY family. As to quaternary structure, probably interacts with PlsX.

The protein resides in the cell inner membrane. The enzyme catalyses an acyl phosphate + sn-glycerol 3-phosphate = a 1-acyl-sn-glycero-3-phosphate + phosphate. It participates in lipid metabolism; phospholipid metabolism. Catalyzes the transfer of an acyl group from acyl-phosphate (acyl-PO(4)) to glycerol-3-phosphate (G3P) to form lysophosphatidic acid (LPA). This enzyme utilizes acyl-phosphate as fatty acyl donor, but not acyl-CoA or acyl-ACP. The protein is Glycerol-3-phosphate acyltransferase of Ralstonia nicotianae (strain ATCC BAA-1114 / GMI1000) (Ralstonia solanacearum).